Reading from the N-terminus, the 66-residue chain is Small ribosomal subunit protein eS27 (66 aa).

Zn(2+)-binding residues include Cys-21, Cys-24, Cys-40, and Cys-43. The segment at 21 to 43 (CPNCGNEQTIFSHATFPVRCLSC) adopts a C4-type zinc-finger fold.

The protein belongs to the eukaryotic ribosomal protein eS27 family. Part of the 30S ribosomal subunit. Requires Zn(2+) as cofactor.

The polypeptide is Small ribosomal subunit protein eS27 (Saccharolobus solfataricus (strain ATCC 35092 / DSM 1617 / JCM 11322 / P2) (Sulfolobus solfataricus)).